The sequence spans 98 residues: Large ribosomal subunit protein uL23 (98 aa).

This sequence belongs to the universal ribosomal protein uL23 family. In terms of assembly, part of the 50S ribosomal subunit. Contacts protein L29, and trigger factor when it is bound to the ribosome.

One of the early assembly proteins it binds 23S rRNA. One of the proteins that surrounds the polypeptide exit tunnel on the outside of the ribosome. Forms the main docking site for trigger factor binding to the ribosome. The chain is Large ribosomal subunit protein uL23 from Bordetella bronchiseptica (strain ATCC BAA-588 / NCTC 13252 / RB50) (Alcaligenes bronchisepticus).